The primary structure comprises 292 residues: Ribosomal protein L11 methyltransferase (292 aa).

The S-adenosyl-L-methionine site is built by threonine 145, glycine 166, aspartate 188, and asparagine 229.

The protein belongs to the methyltransferase superfamily. PrmA family.

The protein localises to the cytoplasm. It catalyses the reaction L-lysyl-[protein] + 3 S-adenosyl-L-methionine = N(6),N(6),N(6)-trimethyl-L-lysyl-[protein] + 3 S-adenosyl-L-homocysteine + 3 H(+). In terms of biological role, methylates ribosomal protein L11. The polypeptide is Ribosomal protein L11 methyltransferase (Pseudoalteromonas atlantica (strain T6c / ATCC BAA-1087)).